The sequence spans 336 residues: 4-hydroxythreonine-4-phosphate dehydrogenase (336 aa).

2 residues coordinate substrate: histidine 142 and threonine 143. Residues histidine 172, histidine 217, and histidine 274 each contribute to the a divalent metal cation site. Substrate contacts are provided by lysine 282, asparagine 291, and arginine 300.

This sequence belongs to the PdxA family. Homodimer. Zn(2+) is required as a cofactor. The cofactor is Mg(2+). It depends on Co(2+) as a cofactor.

The protein resides in the cytoplasm. It catalyses the reaction 4-(phosphooxy)-L-threonine + NAD(+) = 3-amino-2-oxopropyl phosphate + CO2 + NADH. It participates in cofactor biosynthesis; pyridoxine 5'-phosphate biosynthesis; pyridoxine 5'-phosphate from D-erythrose 4-phosphate: step 4/5. Its function is as follows. Catalyzes the NAD(P)-dependent oxidation of 4-(phosphooxy)-L-threonine (HTP) into 2-amino-3-oxo-4-(phosphooxy)butyric acid which spontaneously decarboxylates to form 3-amino-2-oxopropyl phosphate (AHAP). This Trichlorobacter lovleyi (strain ATCC BAA-1151 / DSM 17278 / SZ) (Geobacter lovleyi) protein is 4-hydroxythreonine-4-phosphate dehydrogenase.